The sequence spans 979 residues: METGSPGKRPVLPKRARLLVTAGMGMLALLLFGPRLVDIYVDWLWFGEVGFRSVWITVLLTRLAIVAAVALVVAGIVLAALLLAYRSRPFFVPDEPQRDPVAPLRSAVMRRPRLFGWGIAVTLGVVCGLIASFDWVKVQLFVHGGTFGIVDPEFGYDIGFFVFDLPFYRSVLNWLFVAVVLAFLASLLTHYLFGGLRLTTGRGMLTQAARVQLAVFAGAVVLLKAVAYWLDRYELLSSGRKEPTFTGAGYTDIHAELPAKLVLVAIAVLCAVSFFTAIFLRDLRIPAMAAALLVLSAILVGGLWPLLMEQFSVRPNAADVERPYIQRNIEATREAYRIGGDWVQYRSYPGIGTKQPRDVPVDVTTIAKVRLLDPHILSRTFTQQQQLKNFFSFAEILDIDRYRIDGELQDYIVGVRELSPKSLTGNQTDWINKHTVYTHGNGFVAAPANRVNAAARGAENISDSNSGYPIYAVSDIASLGSGRQVIPVEQPRVYYGEVIAQADPDYAIVGGAPGSAPREYDTDTSKYTYTGAGGVSIGNWFNRTVFATKVAQHKFLFSREIGSESKVLIHRDPKERVQRVAPWLTTDDNPYPVVVNGRIVWIVDAYTTLDTYPYAQRSSLEGPVTSPTGIVRQGKQVSYVRNSVKATVDAYDGTVTLFQFDRDDPVLRTWMRAFPGTVKSEDQIPDELRAHFRYPEDLFEVQRSLLAKYHVDEPREFFTTNAFWSVPSDPTNNANATQPPFYVLVGDQQSAQPSFRLASAMVGYNREFLSAYISAHSDPANYGKLTVLELPTDTLTQGPQQIQNSMISDTRVASERTLLERSNRIHYGNLLSLPIADGGVLYVEPLYTERISTSPSSSTFPQLSRVLVSVREPRTEGGVRVGYAPTLAESLDQVFGPGTGRVATARGGDAASAPPPGAGGPAPPQAVPPPRTTQPPAAPPRGPDVPPATVAELRETLADLRAVLDRLEKAIDAAETPGG.

A run of 7 helical transmembrane segments spans residues 19–41 (LVTA…DIYV), 63–85 (LAIV…LLAY), 114–136 (LFGW…FDWV), 174–196 (WLFV…FGGL), 208–230 (AARV…AYWL), 261–280 (LVLV…AIFL), and 285–307 (IPAM…WPLL). Residues 898–948 (GTGRVATARGGDAASAPPPGAGGPAPPQAVPPPRTTQPPAAPPRGPDVPPA) are disordered. Pro residues predominate over residues 913-946 (APPPGAGGPAPPQAVPPPRTTQPPAAPPRGPDVP).

Belongs to the UPF0182 family.

Its subcellular location is the cell membrane. The protein is UPF0182 protein Rv0064 of Mycobacterium tuberculosis (strain ATCC 25618 / H37Rv).